The following is a 59-amino-acid chain: Protein translocase subunit SecE (59 aa).

Residues 30–50 (ITVISTVIFFVIFFALLDTGI) form a helical membrane-spanning segment.

It belongs to the SecE/SEC61-gamma family. Component of the Sec protein translocase complex. Heterotrimer consisting of SecY, SecE and SecG subunits. The heterotrimers can form oligomers, although 1 heterotrimer is thought to be able to translocate proteins. Interacts with the ribosome. Interacts with SecDF, and other proteins may be involved. Interacts with SecA.

The protein resides in the cell membrane. Its function is as follows. Essential subunit of the Sec protein translocation channel SecYEG. Clamps together the 2 halves of SecY. May contact the channel plug during translocation. The chain is Protein translocase subunit SecE from Bacillus subtilis (strain 168).